Reading from the N-terminus, the 479-residue chain is Probable aspartic-type endopeptidase OPSB (479 aa).

Positions 1–19 (MRGDSFIWSLTTAASLLYA) are cleaved as a signal peptide. The 336-residue stretch at 58 to 393 (SGKTVSQDLD…DLDNNEISIA (336 aa)) folds into the Peptidase A1 domain. Residue N68 is glycosylated (N-linked (GlcNAc...) asparagine). Residue D76 is part of the active site. The N-linked (GlcNAc...) asparagine glycan is linked to N121. Residue D275 is part of the active site. An N-linked (GlcNAc...) asparagine glycan is attached at N398. A disordered region spans residues 435-454 (LSGIETGVPGARPTSRGAAP). G451 is lipidated: GPI-anchor amidated glycine. Residues 452 to 479 (AAPTMRPDVTFGVAAAGLAGAGILFAFM) constitute a propeptide, removed in mature form.

The protein belongs to the peptidase A1 family.

It is found in the cell membrane. Functionally, probable GPI-anchored aspartic-type endopeptidase which contributes to virulence. The protein is Probable aspartic-type endopeptidase OPSB (OPSB) of Arthroderma otae (strain ATCC MYA-4605 / CBS 113480) (Microsporum canis).